A 436-amino-acid polypeptide reads, in one-letter code: Glutamate-1-semialdehyde 2,1-aminomutase (436 aa).

Lys-276 carries the post-translational modification N6-(pyridoxal phosphate)lysine.

Belongs to the class-III pyridoxal-phosphate-dependent aminotransferase family. HemL subfamily. In terms of assembly, homodimer. Requires pyridoxal 5'-phosphate as cofactor.

Its subcellular location is the cytoplasm. The enzyme catalyses (S)-4-amino-5-oxopentanoate = 5-aminolevulinate. It participates in porphyrin-containing compound metabolism; protoporphyrin-IX biosynthesis; 5-aminolevulinate from L-glutamyl-tRNA(Glu): step 2/2. It functions in the pathway porphyrin-containing compound metabolism; chlorophyll biosynthesis. The polypeptide is Glutamate-1-semialdehyde 2,1-aminomutase (Synechococcus sp. (strain JA-2-3B'a(2-13)) (Cyanobacteria bacterium Yellowstone B-Prime)).